The primary structure comprises 275 residues: tRNA uridine(34) hydroxylase (275 aa).

The region spanning 121–214 (SQPDVLVIDT…YLEKTYNKNG (94 aa)) is the Rhodanese domain. Cys-174 functions as the Cysteine persulfide intermediate in the catalytic mechanism.

This sequence belongs to the TrhO family.

It catalyses the reaction uridine(34) in tRNA + AH2 + O2 = 5-hydroxyuridine(34) in tRNA + A + H2O. Catalyzes oxygen-dependent 5-hydroxyuridine (ho5U) modification at position 34 in tRNAs. This Wolbachia pipientis wMel protein is tRNA uridine(34) hydroxylase.